The sequence spans 443 residues: ATP-dependent RNA helicase SUB2 (443 aa).

Residues 60 to 88 (TGFRDFLLKPELLRAITDCGFEHPSEVQQ) carry the Q motif motif. Residues 91–266 (IPTAILKVDV…KKFMRNPLEV (176 aa)) form the Helicase ATP-binding domain. Residue 104 to 111 (AKSGLGKT) coordinates ATP. The DEAD box signature appears at 213 to 216 (DECD). The 146-residue stretch at 294–439 (KLNELLDNLE…EYPEEGVDAS (146 aa)) folds into the Helicase C-terminal domain.

Belongs to the DEAD box helicase family. DECD subfamily.

The protein resides in the nucleus. The enzyme catalyses ATP + H2O = ADP + phosphate + H(+). ATP-binding RNA helicase involved in transcription elongation and required for the export of mRNA out of the nucleus. SUB2 also plays a role in pre-mRNA splicing and spliceosome assembly. May be involved in rDNA and telomeric silencing, and maintenance of genome integrity. This is ATP-dependent RNA helicase SUB2 (SUB2) from Coccidioides immitis (strain RS) (Valley fever fungus).